Consider the following 461-residue polypeptide: V-type ATP synthase beta chain 1 (461 aa).

The protein belongs to the ATPase alpha/beta chains family.

Its function is as follows. Produces ATP from ADP in the presence of a proton gradient across the membrane. The V-type beta chain is a regulatory subunit. The protein is V-type ATP synthase beta chain 1 of Clostridium tetani (strain Massachusetts / E88).